Consider the following 348-residue polypeptide: MSVPTTQKAVVFESNGGPLLYKDIPVPTPKPNEILINVKYSGVCHTDLHAWKGDWPLDTKLPLVGGHEGAGVVVGIGSNVTGWELGDYAGIKWLNGSCLNCEFCQHSDEPNCAKADLSGYTHDGSFQQYATADAVQAARLPKGTDLAQAAPILCAGITVYKALKTAQIQPGNWVCISGAGGGLGSLAIQYAKAMGFRVIAIDGGEEKGEFVKSLGAEAYVDFTVSKDIVKDIQTATDGGPHAAINVSVSEKAIAQSCQYVRSTGTVVLVGLPAGAKVVAPVFDAVVKSISIRGSYVGNRADSAEAIDFFTRGLIKCPIKVVGLSELPKVYELMEAGKVIGRYVVDTSK.

Residues Cys-44, His-67, Cys-98, Cys-101, Cys-104, Cys-112, and Cys-154 each contribute to the Zn(2+) site. Residues 178–184 (GAGGGLG), Asp-202, Lys-207, 269–271 (VGL), and Arg-341 each bind NAD(+).

It belongs to the zinc-containing alcohol dehydrogenase family. Homotetramer. It depends on Zn(2+) as a cofactor.

Its subcellular location is the cytoplasm. It carries out the reaction a primary alcohol + NAD(+) = an aldehyde + NADH + H(+). The catalysed reaction is a secondary alcohol + NAD(+) = a ketone + NADH + H(+). In terms of biological role, converts ethanol to acetaldehyde and plays a major role in xylose fermentation. This Scheffersomyces stipitis (strain ATCC 58785 / CBS 6054 / NBRC 10063 / NRRL Y-11545) (Yeast) protein is Alcohol dehydrogenase 1 (ADH1).